Here is a 173-residue protein sequence, read N- to C-terminus: Peptide deformylase (173 aa).

Fe cation contacts are provided by cysteine 98 and histidine 140. Glutamate 141 is an active-site residue. Position 144 (histidine 144) interacts with Fe cation.

The protein belongs to the polypeptide deformylase family. Fe(2+) serves as cofactor.

It catalyses the reaction N-terminal N-formyl-L-methionyl-[peptide] + H2O = N-terminal L-methionyl-[peptide] + formate. Its function is as follows. Removes the formyl group from the N-terminal Met of newly synthesized proteins. Requires at least a dipeptide for an efficient rate of reaction. N-terminal L-methionine is a prerequisite for activity but the enzyme has broad specificity at other positions. This is Peptide deformylase from Caulobacter vibrioides (strain ATCC 19089 / CIP 103742 / CB 15) (Caulobacter crescentus).